Here is a 76-residue protein sequence, read N- to C-terminus: Vasotab (76 aa).

An N-terminal signal peptide occupies residues 1-20 (MKFALFSVLVVLLIATFVAA). Positions 21–76 (DECPRICTADYRPVCGTPSGGRRSANRTFGNQCSLNAHNCLNKGDTYDKLHDGECK) constitute a Kazal-like domain. Disulfide bonds link Cys23-Cys60, Cys27-Cys53, and Cys35-Cys75.

In terms of tissue distribution, expressed by the salivary gland.

The protein resides in the secreted. Vasodilator protein that inhibits vasoconstriction of isolated rat femoral artery induced by phenylephrine. Since platelet aggregation and vasoconstriction are key hemostatic responses, particularly in small wounds, this protein likely participates in the antihemostatic responses during blood feeding. Blocks L-type calcium channels (Cav1/CACNA1) in left ventricular myocytes isolated from rat hearts. The polypeptide is Vasotab (Hybomitra bimaculata (Horse fly)).